The sequence spans 55 residues: Large ribosomal subunit protein bL33A (55 aa).

The protein belongs to the bacterial ribosomal protein bL33 family.

This chain is Large ribosomal subunit protein bL33A, found in Mycobacterium ulcerans (strain Agy99).